We begin with the raw amino-acid sequence, 405 residues long: Imidazolonepropionase (405 aa).

Residues His73 and His75 each contribute to the Fe(3+) site. Zn(2+) contacts are provided by His73 and His75. Residues Arg82, Tyr145, and His178 each contribute to the 4-imidazolone-5-propanoate site. Residue Tyr145 participates in N-formimidoyl-L-glutamate binding. Position 243 (His243) interacts with Fe(3+). His243 serves as a coordination point for Zn(2+). 4-imidazolone-5-propanoate is bound at residue Gln246. Asp318 provides a ligand contact to Fe(3+). Position 318 (Asp318) interacts with Zn(2+). Residues Asn320 and Gly322 each contribute to the N-formimidoyl-L-glutamate site. Thr323 is a 4-imidazolone-5-propanoate binding site.

This sequence belongs to the metallo-dependent hydrolases superfamily. HutI family. It depends on Zn(2+) as a cofactor. Requires Fe(3+) as cofactor.

It is found in the cytoplasm. The enzyme catalyses 4-imidazolone-5-propanoate + H2O = N-formimidoyl-L-glutamate. It participates in amino-acid degradation; L-histidine degradation into L-glutamate; N-formimidoyl-L-glutamate from L-histidine: step 3/3. Catalyzes the hydrolytic cleavage of the carbon-nitrogen bond in imidazolone-5-propanoate to yield N-formimidoyl-L-glutamate. It is the third step in the universal histidine degradation pathway. The chain is Imidazolonepropionase from Brucella anthropi (strain ATCC 49188 / DSM 6882 / CCUG 24695 / JCM 21032 / LMG 3331 / NBRC 15819 / NCTC 12168 / Alc 37) (Ochrobactrum anthropi).